A 371-amino-acid polypeptide reads, in one-letter code: tRNA-specific 2-thiouridylase MnmA (371 aa).

Residues 13–20 (GMSGGVDS) and M39 contribute to the ATP site. The interval 99-101 (NPD) is interaction with target base in tRNA. C104 (nucleophile) is an active-site residue. C104 and C200 are disulfide-bonded. G128 is an ATP binding site. Residues 150 to 152 (KDQ) are interaction with tRNA. C200 acts as the Cysteine persulfide intermediate in catalysis. Positions 308-309 (RY) are interaction with tRNA.

This sequence belongs to the MnmA/TRMU family.

The protein resides in the cytoplasm. The catalysed reaction is S-sulfanyl-L-cysteinyl-[protein] + uridine(34) in tRNA + AH2 + ATP = 2-thiouridine(34) in tRNA + L-cysteinyl-[protein] + A + AMP + diphosphate + H(+). Functionally, catalyzes the 2-thiolation of uridine at the wobble position (U34) of tRNA, leading to the formation of s(2)U34. The protein is tRNA-specific 2-thiouridylase MnmA of Bacillus thuringiensis (strain Al Hakam).